Reading from the N-terminus, the 240-residue chain is Ribosomal RNA large subunit methyltransferase E (240 aa).

Positions 1-13 (MAKKPGSQNTSGR) are enriched in polar residues. Residues 1-20 (MAKKPGSQNTSGRGQRDLKV) are disordered. Gly-85, Trp-87, Asp-113, Asp-129, and Asp-153 together coordinate S-adenosyl-L-methionine. Lys-193 functions as the Proton acceptor in the catalytic mechanism.

This sequence belongs to the class I-like SAM-binding methyltransferase superfamily. RNA methyltransferase RlmE family.

It is found in the cytoplasm. The catalysed reaction is uridine(2552) in 23S rRNA + S-adenosyl-L-methionine = 2'-O-methyluridine(2552) in 23S rRNA + S-adenosyl-L-homocysteine + H(+). Specifically methylates the uridine in position 2552 of 23S rRNA at the 2'-O position of the ribose in the fully assembled 50S ribosomal subunit. This Roseobacter denitrificans (strain ATCC 33942 / OCh 114) (Erythrobacter sp. (strain OCh 114)) protein is Ribosomal RNA large subunit methyltransferase E.